The sequence spans 326 residues: Aspartate carbamoyltransferase catalytic subunit (326 aa).

Positions 65 and 66 each coordinate carbamoyl phosphate. L-aspartate is bound at residue Lys93. Carbamoyl phosphate is bound by residues Arg115, His143, and Gln146. L-aspartate is bound by residues Arg176 and Arg230. Carbamoyl phosphate-binding residues include Gly271 and Pro272.

This sequence belongs to the aspartate/ornithine carbamoyltransferase superfamily. ATCase family. In terms of assembly, heterododecamer (2C3:3R2) of six catalytic PyrB chains organized as two trimers (C3), and six regulatory PyrI chains organized as three dimers (R2).

It carries out the reaction carbamoyl phosphate + L-aspartate = N-carbamoyl-L-aspartate + phosphate + H(+). It functions in the pathway pyrimidine metabolism; UMP biosynthesis via de novo pathway; (S)-dihydroorotate from bicarbonate: step 2/3. Its function is as follows. Catalyzes the condensation of carbamoyl phosphate and aspartate to form carbamoyl aspartate and inorganic phosphate, the committed step in the de novo pyrimidine nucleotide biosynthesis pathway. The polypeptide is Aspartate carbamoyltransferase catalytic subunit (Mesorhizobium japonicum (strain LMG 29417 / CECT 9101 / MAFF 303099) (Mesorhizobium loti (strain MAFF 303099))).